A 588-amino-acid polypeptide reads, in one-letter code: Snake venom 5'-nucleotidase (588 aa).

The signal sequence occupies residues 1–40; it reads MQTPKRRRGAQGCPRSSPSPPLLLLVRAVWFCAALSVAAG. 2 residues coordinate Zn(2+): aspartate 51 and histidine 53. An intrachain disulfide couples cysteine 66 to cysteine 71. 2 residues coordinate Zn(2+): aspartate 99 and asparagine 131. Asparagine 167 carries an N-linked (GlcNAc...) asparagine glycan. 2 residues coordinate Zn(2+): histidine 234 and histidine 257. Asparagine 347 and asparagine 361 each carry an N-linked (GlcNAc...) asparagine glycan. 2 cysteine pairs are disulfide-bonded: cysteine 367-cysteine 372 and cysteine 379-cysteine 401. Arginine 368 is an AMP binding site. Residues asparagine 404 and arginine 409 each coordinate AMP. Asparagine 418 is a glycosylation site (N-linked (GlcNAc...) asparagine). Residue phenylalanine 432 coordinates AMP. Cysteines 491 and 494 form a disulfide. AMP contacts are provided by phenylalanine 515 and aspartate 521. N-linked (GlcNAc...) asparagine glycosylation occurs at asparagine 532. The GPI-anchor amidated serine moiety is linked to residue serine 564. Positions 565–588 are cleaved as a propeptide — removed in mature form; sequence AGTLFQAQLFLTWGLCVSLLYFIL.

Belongs to the 5'-nucleotidase family. Zn(2+) is required as a cofactor. Post-translationally, venom 5'-nucleotidases (or a part thereof) may be released into the venom via exosome-like vesicles. They may be attached via a GPI anchor to the membrane of these vesicles. Soluble forms of 5'-nucleotidase might be released by cleavage of the ectodomain in the exosome-like vesicles or venom gland cells. As to expression, expressed by the venom gland.

Its subcellular location is the membrane. It carries out the reaction a ribonucleoside 5'-phosphate + H2O = a ribonucleoside + phosphate. Hydrolyzes nucleotides into nucleosides. Snake venom 5'-nucleotidases are widely distributed among venomous snake taxa, but there is a lack of information about their biological activities. They have been shown to inhibit platelet aggregation. This effect may be due to the liberation of inhibitory AMP or adenosine by its action on ADP released upon initiation of aggregation. Venom 5'-nucleotidases are also known to synergistically act in vivo with other toxins like ADPases, phospholipases, and disintegrins to exert a more pronounced anti-coagulant effect. The chain is Snake venom 5'-nucleotidase from Crotalus adamanteus (Eastern diamondback rattlesnake).